Consider the following 1216-residue polypeptide: FK506-binding protein 15 (1216 aa).

M1 is subject to N-acetylmethionine. S14 and S23 each carry phosphoserine. Positions 41-68 (YTAPKQPKKGQGTAAGNQTAPKPAPATT) are disordered. Residues 59–68 (TAPKPAPATT) show a composition bias toward low complexity. The important for function in growth cone organization stretch occupies residues 71–168 (SSVLFATAVH…AVSFNKQVCV (98 aa)). K91 carries the N6-acetyllysine modification. The PPIase FKBP-type domain occupies 196 to 289 (GDSLEVAYTG…VFEVEVRRVK (94 aa)). The disordered stretch occupies residues 292 to 357 (RDSGSDGHSV…QLTVNSNPDT (66 aa)). A compositionally biased stretch (low complexity) spans 303–322 (SRDSAAPSPIPASDSLSADP). 5 positions are modified to phosphoserine: S306, S310, S342, S344, and S617. A compositionally biased stretch (polar residues) spans 340 to 356 (SKSNSLSEQLTVNSNPD). Coiled coils occupy residues 519–790 (MAVN…AAAE) and 820–865 (QQYR…RLEK). A disordered region spans residues 927-1216 (HQEEEEEEEE…DDDDDIGWLG (290 aa)). The span at 929–940 (EEEEEEEEEEEE) shows a compositional bias: acidic residues. Phosphoserine is present on S948. The span at 954–964 (PATPGMPPAPP) shows a compositional bias: pro residues. A compositionally biased stretch (low complexity) spans 983–994 (TTPLPLQALPTP). S1018 carries the phosphoserine modification. Positions 1036-1045 (TSIPPKPPGP) are enriched in pro residues. Residues S1050 and S1091 each carry the phosphoserine modification. Position 1093 is a phosphothreonine (T1093). A phosphoserine mark is found at S1108, S1153, S1157, S1159, and S1190. At T1198 the chain carries Phosphothreonine. Positions 1202–1216 (GDDDDDDDDDIGWLG) are enriched in acidic residues.

Belongs to the FKBP-type PPIase family. As to quaternary structure, interacts with WIP and actin. Interacts with TBC1D23. As to expression, expressed in brain, with highest levels in the granular cell layer of cerebellum and in the granule cell layer of dentate gyrus.

It localises to the cytoplasm. The protein resides in the cell projection. Its subcellular location is the axon. The protein localises to the early endosome. Involved in the transport of early endosomes at the level of transition between microfilament-based and microtubule-based movement. May be involved in the cytoskeletal organization of neuronal growth cones. Seems to be inactive as a PPIase. In Mus musculus (Mouse), this protein is FK506-binding protein 15 (Fkbp15).